Here is a 256-residue protein sequence, read N- to C-terminus: Transmembrane protein 74B (256 aa).

A disordered region spans residues 1–111; the sequence is MPPAQGYEFA…LSLHSEEGPA (111 aa). A compositionally biased stretch (low complexity) spans 80 to 96; that stretch reads RLGSSPSPPGGVSSLPR. Residues 97 to 108 show a composition bias toward basic and acidic residues; it reads SQRDDLSLHSEE. 2 consecutive transmembrane segments (helical) span residues 123–143 and 177–197; these read FVSA…AYAI and IIAG…LLMV.

Belongs to the TMEM74 family.

The protein localises to the membrane. The chain is Transmembrane protein 74B (TMEM74B) from Homo sapiens (Human).